The chain runs to 445 residues: Interferon-activable protein 202 (445 aa).

Over residues 1–27 (MSNRNLRSSTNSEFSEGQHQTPSSDSS) the composition is skewed to polar residues. Positions 1 to 57 (MSNRNLRSSTNSEFSEGQHQTPSSDSSGHGEDQPQASPGPNKKSHTPKKNISKGAVL) are disordered. Residues 42 to 51 (KKSHTPKKNI) are compositionally biased toward basic residues. HIN-200 domains follow at residues 46–243 (TPKK…IKGE) and 244–441 (KLLK…MEVI). Required for homomultimerization regions lie at residues 82–89 (MFHATVAT) and 281–288 (MFHATVAT).

The protein belongs to the HIN-200 family. Homomultimer; homotetramerizes (via HIN-200 domain 2), enhancing affinity for double-stranded DNA (dsDNA). Interacts (via HIN-200 domain 2) with AIM2 (via HIN-200 domain); preventing activation of the AIM2 inflammasome. Binds to several transcription factors, including NF-kappa-B p50 (NFKB1) and p65 (RELA), FOS, JUN, E2F1, E2F4, MYOD1 and myogenin. Also binds TP53/p53, the hypophosphorylated, growth-inhibitory form of the retinoblastoma protein and the p53-binding protein 1 (TP53BP1). Post-translationally, phosphorylated.

It is found in the cytoplasm. It localises to the nucleus. DNA-binding protein involved in innate immune response and has anti-inflammatory activity. Inhibits caspase activation in response to cytosolic DNA by preventing activation of the AIM2 inflammasome, probably by sequestering cytoplasmic DNA and preventing its being bound by AIM2. Also inhibits activation of the AIM2 inflammasome via a direct interaction with AIM2, which prevents the interaction between AIM2 and PYCARD and formation of the AIM2 inflammasome. Binds double-stranded DNA (dsDNA) in the cytosol. Has anti-apoptotic effects due to inhibition of the transcriptional activity of TP53/p53. Inhibits the transcriptional activity of several transcription factors, including NF-kappa-B p50 and p65, FOS, JUN, E2F1, E2F4, MYOD1 and myogenin. The protein is Interferon-activable protein 202 of Mus musculus (Mouse).